Here is a 377-residue protein sequence, read N- to C-terminus: 8-amino-7-oxononanoate synthase (377 aa).

Residue R13 coordinates substrate. A pyridoxal 5'-phosphate-binding site is contributed by 100-101 (GY). H125 contacts substrate. S171, H199, and T228 together coordinate pyridoxal 5'-phosphate. Position 231 is an N6-(pyridoxal phosphate)lysine (K231). T345 contributes to the substrate binding site.

It belongs to the class-II pyridoxal-phosphate-dependent aminotransferase family. BioF subfamily. In terms of assembly, homodimer. Pyridoxal 5'-phosphate is required as a cofactor.

It catalyses the reaction 6-carboxyhexanoyl-[ACP] + L-alanine + H(+) = (8S)-8-amino-7-oxononanoate + holo-[ACP] + CO2. Its pathway is cofactor biosynthesis; biotin biosynthesis. Functionally, catalyzes the decarboxylative condensation of pimeloyl-[acyl-carrier protein] and L-alanine to produce 8-amino-7-oxononanoate (AON), [acyl-carrier protein], and carbon dioxide. The protein is 8-amino-7-oxononanoate synthase of Nitrosococcus oceani (strain ATCC 19707 / BCRC 17464 / JCM 30415 / NCIMB 11848 / C-107).